The primary structure comprises 143 residues: uncharacterized protein (143 aa).

The segment covering 1–14 (MPAAKKQIEEKPEV) has biased composition (basic and acidic residues). The segment at 1 to 25 (MPAAKKQIEEKPEVEQDLGAPDFSD) is disordered.

This is an uncharacterized protein from Pseudoalteromonas phage PM2 (Bacteriophage PM2).